The primary structure comprises 290 residues: Cell division protein ZipA (290 aa).

Residue Met1 is a topological domain, periplasmic. A helical transmembrane segment spans residues 2 to 22 (DIGLREWLIVIGLIVIAGILF). The Cytoplasmic portion of the chain corresponds to 23-290 (DGWRRMRGGK…HERRSLMQKR (268 aa)). The segment at 66–143 (REPSFDEQDL…REKAPSVAAA (78 aa)) is disordered. The segment covering 81-99 (REGKERKGGKRQDEPRQGD) has biased composition (basic and acidic residues). Residues 100 to 114 (LDLDEGMALEADPSD) show a composition bias toward acidic residues.

The protein belongs to the ZipA family. As to quaternary structure, interacts with FtsZ via their C-terminal domains.

It is found in the cell inner membrane. Essential cell division protein that stabilizes the FtsZ protofilaments by cross-linking them and that serves as a cytoplasmic membrane anchor for the Z ring. Also required for the recruitment to the septal ring of downstream cell division proteins. The sequence is that of Cell division protein ZipA from Pseudomonas paraeruginosa (strain DSM 24068 / PA7) (Pseudomonas aeruginosa (strain PA7)).